The primary structure comprises 661 residues: Threonine--tRNA ligase (661 aa).

In terms of domain architecture, TGS spans 1–64 (MSQAISLTFP…TTGRIEIITR (64 aa)). The tract at residues 245–546 (DHRRLGREMD…LIENFAGHMP (302 aa)) is catalytic. Zn(2+)-binding residues include C341, H392, and H523.

The protein belongs to the class-II aminoacyl-tRNA synthetase family. Homodimer. The cofactor is Zn(2+).

The protein resides in the cytoplasm. It carries out the reaction tRNA(Thr) + L-threonine + ATP = L-threonyl-tRNA(Thr) + AMP + diphosphate + H(+). Catalyzes the attachment of threonine to tRNA(Thr) in a two-step reaction: L-threonine is first activated by ATP to form Thr-AMP and then transferred to the acceptor end of tRNA(Thr). Also edits incorrectly charged L-seryl-tRNA(Thr). The sequence is that of Threonine--tRNA ligase from Rhizobium johnstonii (strain DSM 114642 / LMG 32736 / 3841) (Rhizobium leguminosarum bv. viciae).